The sequence spans 698 residues: Methionine--tRNA ligase (698 aa).

The 'HIGH' region signature appears at 21–31 (PYANGPLHFGH). Cys-153, Cys-156, Cys-166, and Cys-169 together coordinate Zn(2+). A 'KMSKS' region motif is present at residues 341-345 (QFSKS). Residue Lys-344 participates in ATP binding. A tRNA-binding domain is found at 599-698 (DFRKLDLRVG…EDVAPGSLVS (100 aa)).

This sequence belongs to the class-I aminoacyl-tRNA synthetase family. MetG type 1 subfamily. As to quaternary structure, homodimer. Zn(2+) serves as cofactor.

Its subcellular location is the cytoplasm. It carries out the reaction tRNA(Met) + L-methionine + ATP = L-methionyl-tRNA(Met) + AMP + diphosphate. Is required not only for elongation of protein synthesis but also for the initiation of all mRNA translation through initiator tRNA(fMet) aminoacylation. The sequence is that of Methionine--tRNA ligase from Protochlamydia amoebophila (strain UWE25).